Reading from the N-terminus, the 400-residue chain is Enoyl-[acyl-carrier-protein] reductase [NADH] (400 aa).

NAD(+) contacts are provided by residues 74–75, 111–112, and 139–140; these read FE, DA, and VA. Position 225 (Y225) interacts with substrate. Y235 (proton donor) is an active-site residue. NAD(+) is bound by residues K244 and 273–275; that span reads VVT.

It belongs to the TER reductase family. As to quaternary structure, monomer.

It carries out the reaction a 2,3-saturated acyl-[ACP] + NAD(+) = a (2E)-enoyl-[ACP] + NADH + H(+). The protein operates within lipid metabolism; fatty acid biosynthesis. Its function is as follows. Involved in the final reduction of the elongation cycle of fatty acid synthesis (FAS II). Catalyzes the reduction of a carbon-carbon double bond in an enoyl moiety that is covalently linked to an acyl carrier protein (ACP). This chain is Enoyl-[acyl-carrier-protein] reductase [NADH], found in Psychromonas ingrahamii (strain DSM 17664 / CCUG 51855 / 37).